The chain runs to 609 residues: Putative transcriptional regulatory protein y4pA (609 aa).

One can recognise a Sigma-54 factor interaction domain in the interval 313-533 (IVGRSPSIQQ…LRSVLETAAI (221 aa)). 395–404 (HPKATLLIES) contributes to the ATP binding site. The H-T-H motif DNA-binding region spans 578 to 597 (RGEAARYLGISRKTLYNKMR).

Its function is as follows. Probable transcriptional regulator that acts in conjunction with sigma-54. The polypeptide is Putative transcriptional regulatory protein y4pA (Sinorhizobium fredii (strain NBRC 101917 / NGR234)).